Here is a 325-residue protein sequence, read N- to C-terminus: Lipoyl synthase (325 aa).

Residues 1 to 32 are disordered; that stretch reads MPPLADASTETLSPAEQAAVRHPEKAHRPDQP. A compositionally biased stretch (basic and acidic residues) spans 19–32; the sequence is AVRHPEKAHRPDQP. Residues Cys66, Cys71, Cys77, Cys92, Cys96, Cys99, and Ser305 each contribute to the [4Fe-4S] cluster site. One can recognise a Radical SAM core domain in the interval 78-294; that stretch reads WAKKHATFMI…AEVANAKGFL (217 aa).

It belongs to the radical SAM superfamily. Lipoyl synthase family. [4Fe-4S] cluster serves as cofactor.

It localises to the cytoplasm. The catalysed reaction is [[Fe-S] cluster scaffold protein carrying a second [4Fe-4S](2+) cluster] + N(6)-octanoyl-L-lysyl-[protein] + 2 oxidized [2Fe-2S]-[ferredoxin] + 2 S-adenosyl-L-methionine + 4 H(+) = [[Fe-S] cluster scaffold protein] + N(6)-[(R)-dihydrolipoyl]-L-lysyl-[protein] + 4 Fe(3+) + 2 hydrogen sulfide + 2 5'-deoxyadenosine + 2 L-methionine + 2 reduced [2Fe-2S]-[ferredoxin]. It participates in protein modification; protein lipoylation via endogenous pathway; protein N(6)-(lipoyl)lysine from octanoyl-[acyl-carrier-protein]: step 2/2. Its function is as follows. Catalyzes the radical-mediated insertion of two sulfur atoms into the C-6 and C-8 positions of the octanoyl moiety bound to the lipoyl domains of lipoate-dependent enzymes, thereby converting the octanoylated domains into lipoylated derivatives. This is Lipoyl synthase from Beijerinckia indica subsp. indica (strain ATCC 9039 / DSM 1715 / NCIMB 8712).